We begin with the raw amino-acid sequence, 325 residues long: Hydroxymethylglutaryl-CoA lyase, mitochondrial (325 aa).

A mitochondrion-targeting transit peptide spans 1–27 (MAAMTKALPRRLVGLASLRAVSTSSMD). The region spanning 33-300 (VKIVEVGPRD…HTGVNLQKLL (268 aa)) is the Pyruvate carboxyltransferase domain. R41 is a substrate binding site. D42 contacts a divalent metal cation. K48 bears the N6-acetyllysine; alternate mark. An N6-succinyllysine; alternate modification is found at K48. Residue K111 is modified to N6-acetyllysine. An N6-acetyllysine; alternate mark is found at K137 and K179. K137 and K179 each carry N6-succinyllysine; alternate. A divalent metal cation-binding residues include H233 and H235. Residue C266 is part of the active site. Residue N275 coordinates a divalent metal cation. A Microbody targeting signal motif is present at residues 323–325 (CKL). N6-acetyllysine is present on K324.

It belongs to the HMG-CoA lyase family. In terms of assembly, homodimer; disulfide-linked. Can also form homotetramers.

It localises to the mitochondrion matrix. The protein localises to the peroxisome. The catalysed reaction is (3S)-3-hydroxy-3-methylglutaryl-CoA = acetoacetate + acetyl-CoA. It functions in the pathway metabolic intermediate metabolism; (S)-3-hydroxy-3-methylglutaryl-CoA degradation; acetoacetate from (S)-3-hydroxy-3-methylglutaryl-CoA: step 1/1. Its function is as follows. Mitochondrial 3-hydroxy-3-methylglutaryl-CoA lyase that catalyzes a cation-dependent cleavage of (S)-3-hydroxy-3-methylglutaryl-CoA into acetyl-CoA and acetoacetate, a key step in ketogenesis. Terminal step in leucine catabolism. Ketone bodies (beta-hydroxybutyrate, acetoacetate and acetone) are essential as an alternative source of energy to glucose, as lipid precursors and as regulators of metabolism. The chain is Hydroxymethylglutaryl-CoA lyase, mitochondrial (HMGCL) from Macaca fascicularis (Crab-eating macaque).